Here is a 213-residue protein sequence, read N- to C-terminus: MRSKYIVIEGLEGAGKTTARNVVVETLEQLGIRDMVFTREPGGTQLAEKLRSLVLDIKSVGDEVITDKAEVLMFYAARVQLVETVIKPALANGTWVIGDRHDLSTQAYQGGGRGIDQHMLATLRDAVLGGFRPDLTLYLDVTPEVGLKRARARGELDRIEQESFDFFNRTRARYLELAAQDKSIHTIDATQPLEAVMDAIRTTVTNWVKELDA.

10-17 is an ATP binding site; that stretch reads GLEGAGKT.

The protein belongs to the thymidylate kinase family.

The catalysed reaction is dTMP + ATP = dTDP + ADP. Its function is as follows. Phosphorylation of dTMP to form dTDP in both de novo and salvage pathways of dTTP synthesis. The sequence is that of Thymidylate kinase from Escherichia coli O1:K1 / APEC.